Reading from the N-terminus, the 325-residue chain is Ribonucleoside-diphosphate reductase small chain (325 aa).

Residues Asp74, Glu105, and His108 each coordinate Fe cation. Tyr112 is a catalytic residue. Fe cation is bound by residues Glu168, Glu202, and His205.

This sequence belongs to the ribonucleoside diphosphate reductase small chain family. In terms of assembly, heterodimer of a large and a small chain. The cofactor is Fe cation.

It carries out the reaction a 2'-deoxyribonucleoside 5'-diphosphate + [thioredoxin]-disulfide + H2O = a ribonucleoside 5'-diphosphate + [thioredoxin]-dithiol. Functionally, ribonucleoside-diphosphate reductase holoenzyme provides the precursors necessary for viral DNA synthesis. Allows virus growth in non-dividing cells. Catalyzes the biosynthesis of deoxyribonucleotides from the corresponding ribonucleotides. The protein is Ribonucleoside-diphosphate reductase small chain of Yaba-like disease virus (YLDV).